The chain runs to 175 residues: Alpha-crystallin B chain (175 aa).

Position 1 is an N-acetylmethionine (M1). S19 carries the post-translational modification Phosphoserine. An O-linked (GlcNAc) serine glycan is attached at S41. Phosphoserine is present on residues S45 and S59. Residues 56–164 enclose the sHSP domain; the sequence is RAPSWIDTGL…PERTIPITRE (109 aa). H83 lines the Zn(2+) pocket. K92 carries the N6-acetyllysine modification. Residues H104, E106, H111, and H119 each contribute to the Zn(2+) site. The segment at 142–175 is disordered; that stretch reads VLTVNGPRKQAPGPERTIPITREEKPAVTAAPKK. K166 is modified (N6-acetyllysine). T170 carries an O-linked (GlcNAc) threonine glycan.

It belongs to the small heat shock protein (HSP20) family. As to quaternary structure, heteromer composed of three CRYAA and one CRYAB subunits. Aggregates with homologous proteins, including the small heat shock protein HSPB1, to form large heteromeric complexes. Inter-subunit bridging via zinc ions enhances stability, which is crucial as there is no protein turn over in the lens. Interacts with HSPBAP1 and TTN/titin. Interacts with TMEM109; in the cellular response to DNA damage. Interacts with DES; binds rapidly during early stages of DES filament assembly and a reduced binding seen in the later stages. Interacts with TMED10; the interaction mediates the translocation from the cytoplasm into the ERGIC (endoplasmic reticulum-Golgi intermediate compartment) and thereby secretion. Interacts with ATP6V1A and with MTOR, forming a ternary complex. In terms of tissue distribution, lens as well as other tissues.

It localises to the cytoplasm. The protein resides in the nucleus. It is found in the secreted. Its subcellular location is the lysosome. Its function is as follows. May contribute to the transparency and refractive index of the lens. Has chaperone-like activity, preventing aggregation of various proteins under a wide range of stress conditions. In lens epithelial cells, stabilizes the ATP6V1A protein, preventing its degradation by the proteasome. This Oryctolagus cuniculus (Rabbit) protein is Alpha-crystallin B chain (CRYAB).